The primary structure comprises 296 residues: Transposase for insertion sequence element IST2 (296 aa).

It belongs to the transposase mutator family.

Functionally, required for the transposition of the insertion element. The polypeptide is Transposase for insertion sequence element IST2 (Acidithiobacillus ferrooxidans (Thiobacillus ferrooxidans)).